A 590-amino-acid polypeptide reads, in one-letter code: Probable metalloendopeptidase G1-type (590 aa).

H41 contributes to the Zn(2+) binding site. E44 is an active-site residue. H45 provides a ligand contact to Zn(2+).

It belongs to the peptidase M44 family. Zn(2+) is required as a cofactor.

In terms of biological role, seems to be involved in viral proteins maturation by cleavage at Ala-Gly-|-Xaa motifs. The sequence is that of Probable metalloendopeptidase G1-type from Homo sapiens (Human).